We begin with the raw amino-acid sequence, 131 residues long: mRNA stability protein IGO2 (131 aa).

The segment covering 1 to 13 (MSEDLSPTSSRVD) has biased composition (polar residues). Residues 1 to 26 (MSEDLSPTSSRVDLSNPHGFTKEGVD) form a disordered region. Serine 2 is subject to N-acetylserine. Phosphoserine is present on residues serine 6, serine 63, serine 108, and serine 119. The tract at residues 81–131 (VNNSSNNLPVTNPSGLRESIIRRRMSSSSGGDSISRQGSISSGPPPRSPNK) is disordered. Residues 106–122 (SSSSGGDSISRQGSISS) show a composition bias toward low complexity.

This sequence belongs to the endosulfine family. In terms of processing, phosphorylated by RIM15.

The protein localises to the cytoplasm. The protein resides in the nucleus. Functionally, required for TORC1 to properly control gene expression and chronological life span. Plays an essential role in initiation of the G0 program by preventing the degradation of specific nutrient-regulated mRNAs via the 5'-3' mRNA decay pathway. This Saccharomyces cerevisiae (strain ATCC 204508 / S288c) (Baker's yeast) protein is mRNA stability protein IGO2 (IGO2).